The sequence spans 217 residues: Protein-L-isoaspartate O-methyltransferase 2 (217 aa).

Residue Ser64 is part of the active site.

It belongs to the methyltransferase superfamily. L-isoaspartyl/D-aspartyl protein methyltransferase family.

The protein localises to the cytoplasm. The enzyme catalyses [protein]-L-isoaspartate + S-adenosyl-L-methionine = [protein]-L-isoaspartate alpha-methyl ester + S-adenosyl-L-homocysteine. Catalyzes the methyl esterification of L-isoaspartyl residues in peptides and proteins that result from spontaneous decomposition of normal L-aspartyl and L-asparaginyl residues. It plays a role in the repair and/or degradation of damaged proteins. This is Protein-L-isoaspartate O-methyltransferase 2 from Rhodopseudomonas palustris (strain HaA2).